The chain runs to 700 residues: Elongation factor G (700 aa).

The tr-type G domain maps to aspartate 10–leucine 285. GTP is bound by residues alanine 19 to threonine 26, aspartate 83 to histidine 87, and asparagine 137 to aspartate 140.

The protein belongs to the TRAFAC class translation factor GTPase superfamily. Classic translation factor GTPase family. EF-G/EF-2 subfamily.

Its subcellular location is the cytoplasm. Its function is as follows. Catalyzes the GTP-dependent ribosomal translocation step during translation elongation. During this step, the ribosome changes from the pre-translocational (PRE) to the post-translocational (POST) state as the newly formed A-site-bound peptidyl-tRNA and P-site-bound deacylated tRNA move to the P and E sites, respectively. Catalyzes the coordinated movement of the two tRNA molecules, the mRNA and conformational changes in the ribosome. This is Elongation factor G from Lacticaseibacillus paracasei (strain ATCC 334 / BCRC 17002 / CCUG 31169 / CIP 107868 / KCTC 3260 / NRRL B-441) (Lactobacillus paracasei).